The following is a 297-amino-acid chain: GTPase Era (297 aa).

Residues 5 to 173 (RAGFVSFVGR…TTELMRLLPV (169 aa)) form the Era-type G domain. Residues 13-20 (GRPNVGKS) form a G1 region. 13 to 20 (GRPNVGKS) provides a ligand contact to GTP. The G2 stretch occupies residues 39 to 43 (QTTRR). The G3 stretch occupies residues 60-63 (DTPG). GTP is bound by residues 60–64 (DTPGV) and 123–126 (TKID). The G4 stretch occupies residues 123 to 126 (TKID). Residues 152 to 154 (VSA) form a G5 region. One can recognise a KH type-2 domain in the interval 205-283 (VEDELPHSLA…FLSIRVKVAK (79 aa)).

This sequence belongs to the TRAFAC class TrmE-Era-EngA-EngB-Septin-like GTPase superfamily. Era GTPase family. Monomer.

It localises to the cytoplasm. Its subcellular location is the cell membrane. In terms of biological role, an essential GTPase that binds both GDP and GTP, with rapid nucleotide exchange. Plays a role in 16S rRNA processing and 30S ribosomal subunit biogenesis and possibly also in cell cycle regulation and energy metabolism. This is GTPase Era from Leifsonia xyli subsp. xyli (strain CTCB07).